Here is a 344-residue protein sequence, read N- to C-terminus: MPAHAYLCAMDAHAPLIDPFARPITYLRVSVTDRCDFRCTYCMAEHMQFLPKRDLLTLEELDRLCSAFVGLGVRKLRVTGGEPLVRRNIMEFFRAMSRHLGAGLDELTLTTNGSQLARFATELADCGVRRVNVSLDTLDEDRFARITRWGRLPQVLQGIEAAKAAGMRVKINTVALKGFNEDELFRLVGWCADQGHDLTFIEVMPMGEMGEEERLDQYWALSDLRDRLGERFTLTPLAERTGGPARYVRLDETGQKIGFITPLTHNFCESCNRVRITCTGELFMCLGQEDRADLRAPLRAGAEDAPLRAAIRDAIARKPKGHDFDYSRRHVAGQVSRYMSHTGG.

The Radical SAM core domain maps to 19 to 244 (PFARPITYLR…TPLAERTGGP (226 aa)). Position 28 (Arg-28) interacts with GTP. The [4Fe-4S] cluster site is built by Cys-35 and Cys-39. S-adenosyl-L-methionine is bound at residue Tyr-41. Cys-42 is a [4Fe-4S] cluster binding site. Arg-77 serves as a coordination point for GTP. Gly-81 is an S-adenosyl-L-methionine binding site. Residue Thr-110 participates in GTP binding. Ser-134 lines the S-adenosyl-L-methionine pocket. Lys-170 contacts GTP. Met-204 contributes to the S-adenosyl-L-methionine binding site. Positions 268 and 271 each coordinate [4Fe-4S] cluster. 273–275 (RVR) contributes to the GTP binding site. Cys-285 contributes to the [4Fe-4S] cluster binding site.

This sequence belongs to the radical SAM superfamily. MoaA family. Monomer and homodimer. Requires [4Fe-4S] cluster as cofactor.

The enzyme catalyses GTP + AH2 + S-adenosyl-L-methionine = (8S)-3',8-cyclo-7,8-dihydroguanosine 5'-triphosphate + 5'-deoxyadenosine + L-methionine + A + H(+). Its pathway is cofactor biosynthesis; molybdopterin biosynthesis. Catalyzes the cyclization of GTP to (8S)-3',8-cyclo-7,8-dihydroguanosine 5'-triphosphate. The polypeptide is GTP 3',8-cyclase (Paracoccus denitrificans (strain Pd 1222)).